The sequence spans 146 residues: Ribonuclease H (146 aa).

One can recognise an RNase H type-1 domain in the interval 1-141; that stretch reads MKKVQLITDG…CDELATRAAR (141 aa). Positions 9, 47, 69, and 133 each coordinate Mg(2+).

It belongs to the RNase H family. Monomer. Mg(2+) is required as a cofactor.

It localises to the cytoplasm. It catalyses the reaction Endonucleolytic cleavage to 5'-phosphomonoester.. In terms of biological role, endonuclease that specifically degrades the RNA of RNA-DNA hybrids. The chain is Ribonuclease H from Solibacter usitatus (strain Ellin6076).